Consider the following 382-residue polypeptide: MAIYTSGTQSDNSEPVGNDPKFYTRPSLGLKLWGPLVPSSDNTTGLWSLVAIQTGLGLFLMQRFRKLGKKWVKRDIADFPSLNRFSTTHGDMYMTRHIPVQFGGTHSFNIRVGTRTGFWYSERFRTIRRVTYLLAGTLILSQSMLEVSRLTLLKYDPWVEEAKSVREKQFFNDIVKYYHEGVDSTKFKAKDELSGQSISLNLPEVKQSIAVARAQAQAENLVTKWFGPLDYKPQSFSEFLDKLEYYLNMTDFLNNLRRQKKNDKINSQLVKLEEENKRNRQRIHTLMAHAPARAIRTNQEVQDIYAIRKVLLHHDTESPNDIPLTEIWAIYNPWTNLALDTALSIKFFPSVIFNEDYYEHQKRLKDSEHVTSIENSEDERKP.

The Mitochondrial intermembrane portion of the chain corresponds to 1–44 (MAIYTSGTQSDNSEPVGNDPKFYTRPSLGLKLWGPLVPSSDNTT). The helical transmembrane segment at 45 to 61 (GLWSLVAIQTGLGLFLM) threads the bilayer. At 62-129 (QRFRKLGKKW…YSERFRTIRR (68 aa)) the chain is on the mitochondrial matrix side. The chain crosses the membrane as a helical span at residues 130–146 (VTYLLAGTLILSQSMLE). At 147–382 (VSRLTLLKYD…IENSEDERKP (236 aa)) the chain is on the mitochondrial intermembrane side.

The protein belongs to the MGR1 family. Component of the mitochondrial inner membrane i-AAA protease complex.

The protein localises to the mitochondrion inner membrane. In terms of biological role, component of the mitochondrial inner membrane i-AAA protease complex required for mitochondrial inner membrane protein turnover. This Kluyveromyces lactis (strain ATCC 8585 / CBS 2359 / DSM 70799 / NBRC 1267 / NRRL Y-1140 / WM37) (Yeast) protein is Mitochondrial inner membrane i-AAA protease complex subunit MGR1 (MGR1).